The chain runs to 398 residues: Serpin-ZX (398 aa).

The segment at 342–366 (GTEAAARTARVVTLRSLPVEPVKVD) is RCL.

Belongs to the serpin family. In terms of tissue distribution, expressed in roots, coleoptiles, shoots, leaves, embryo and endosperm.

Inhibits chymotrypsin, cathepsin G and trypsin in vitro. The polypeptide is Serpin-ZX (PAZX) (Hordeum vulgare (Barley)).